We begin with the raw amino-acid sequence, 951 residues long: Sodium/potassium exporting P-type ATPase 1 (951 aa).

Over 1–57 (MMGANSTEWHGQSVEQVTELLGTDVERGLKESVVGQLQKQFGPNELKGQRGVNPWKV) the chain is Cytoplasmic. The chain crosses the membrane as a helical span at residues 58 to 78 (LLAQFTNGLTVILLIATVVSF). At 79–82 (AVQD) the chain is on the extracellular side. The chain crosses the membrane as a helical span at residues 83–103 (HAEGGVLAFVIIFNASVGFVQ). Topologically, residues 104–247 (EYRAEKTMDA…TPMQKRLNRM (144 aa)) are cytoplasmic. Residues 248 to 268 (AYILFGISLVLAVIVFAVNKF) form a helical membrane-spanning segment. At 269–273 (EFNTD) the chain is on the extracellular side. The chain crosses the membrane as a helical span at residues 274–294 (IIIYAVSLGIAVIPEGLIAVI). Over 295–717 (TIVMALGVRR…GRRIFSNIRK (423 aa)) the chain is Cytoplasmic. D330 functions as the 4-aspartylphosphate intermediate in the catalytic mechanism. Residues D330 and T332 each coordinate Mg(2+). ATP is bound by residues T332, E414, K467, R511, T575, G576, D577, R636, and K642. D661 contributes to the Mg(2+) binding site. N664 lines the ATP pocket. A helical transmembrane segment spans residues 718 to 738 (FILHLVSTNVGEVIVLIIGLA). The Extracellular portion of the chain corresponds to 739–743 (FKDRN). The chain crosses the membrane as a helical span at residues 744-764 (GVSVFPLAPVQILFMNMVTST). The Cytoplasmic segment spans residues 765-799 (PPAMALGVEAASKDTMKVPPHTKGLFGKEVLADMM). Residues 800 to 820 (VYGIIMGSLILVDWVLVIYAF) form a helical membrane-spanning segment. Over 821-840 (GDSQLGLECNSDRMLNECNT) the chain is Extracellular. A helical transmembrane segment spans residues 841–861 (VFRARSTIMVALIWMLLLHAY). Residues 862–885 (NCRHPRASLFTAEGGGASKLFSNR) lie on the Cytoplasmic side of the membrane. The helical transmembrane segment at 886 to 906 (LLVWSVLLGSLMPIPTVYIPT) threads the bilayer. The Extracellular segment spans residues 907–916 (LNTKIFKQET). A helical transmembrane segment spans residues 917–937 (ISWEWSIVVVSVVAFFFLSEL). Over 938-951 (YKLIKRNVMTSRVI) the chain is Cytoplasmic.

It belongs to the cation transport ATPase (P-type) (TC 3.A.3) family. Type IID subfamily. Requires Mg(2+) as cofactor. In terms of processing, the active site is phosphorylated in presence of sodium or potassium and in conditions of higher pH. Not phosphorylated in presence of calcium ions.

It is found in the cell membrane. It carries out the reaction Na(+)(in) + ATP + H2O = Na(+)(out) + ADP + phosphate + H(+). The enzyme catalyses K(+)(in) + ATP + H2O = K(+)(out) + ADP + phosphate + H(+). Catalyzes the hydrolysis of ATP coupled with the export of sodium and potassium from the cell. Appears to export potassium more efficiently than sodium. May transport other cations such as lithium. Sodium/potassium efflux ATPases are involved in salt tolerance and maintaining the membrane potential across the plasma membrane in high salinity (Na+) or alkaline (K+) environments. The sequence is that of Sodium/potassium exporting P-type ATPase 1 from Marchantia polymorpha (Common liverwort).